A 706-amino-acid polypeptide reads, in one-letter code: MTTTSKNCLTLTSIAAAVAAVLVLSACGGGSAGENINRKPTYLGTVVSVNYDGASDDLLTAGLGKTGLGATAPVAADPLNPTAAELRRIAIFNNYRALLDISVAGGYGSLYGPNVDASGVITTSEGKIAGTEYMAYSDDGTGNQNITMLVQVPTTFNPASPCIVTGTSSGSRGVYGAIGTSGEWGLKNGCAVAYTDKGTGTGIHDLQNDTVNLQRGERATATAAGKASNFTASLTSTERAAFNTATPNRFAVKHAHSQQNTEKDWGKWTLQAVEFAYFVLNENYGDAAKDGVSRLVKLKPANTIVIASSASNGAGAALAAAELDTKGLITGVAVAEPQIQVVPDTRLSVRRGASTLGGTGRSLFDYASLGNLLQPCAALASPTTNVFNTVNTTIATNRCNALQASGLIVGNTTAELAADAMARLLAAGHQPESSVLQASHYSFATPAVAVTFANSYGRFSVKDNLCGFSFAATGAAGSATPNAPVAASAAALATSFGASNGIPPTVGINIVNNNSVGGPLLDAASLSAGSVLDYNIAGALCLRELLGGSSANALKVQQGINEVLRTGDLQGKPALIVHGRADAQVPVAFSSRPYFGRNKIVEGANSRLSYIEVTNAQHFDAFLAFPGYGERFVPAHRYFIQAMDMMYANLKTGAALPASQVVRTVPRGLTGAVVNPITPANVPPIKTVPAVADQITFANNVVTVAD.

The signal sequence occupies residues M1–A32. The active-site Charge relay system is S311.

This sequence belongs to the D-(-)-3-hydroxybutyrate oligomer hydrolase family.

It is found in the secreted. The catalysed reaction is (3R)-hydroxybutanoate dimer + H2O = 2 (R)-3-hydroxybutanoate + H(+). It participates in lipid metabolism; butanoate metabolism. Participates in the degradation of poly-3-hydroxybutyrate (PHB). It works downstream of poly(3-hydroxybutyrate) depolymerase, hydrolyzing D(-)-3-hydroxybutyrate oligomers of various length (3HB-oligomers) into 3HB-monomers. This Polaromonas sp. (strain JS666 / ATCC BAA-500) protein is D-(-)-3-hydroxybutyrate oligomer hydrolase.